A 328-amino-acid chain; its full sequence is Homeobox protein DLX-2 (328 aa).

2 stretches are compositionally biased toward polar residues: residues 16–28 and 52–72; these read QIAASSTYHQHQQ and ESPTLPVSTATDSSYYTNQQH. Disordered regions lie at residues 16–81, 211–270, and 300–328; these read QIAA…GGGG, WKSG…SSPS, and LHPTQTPQPHHHHHHHGGGGAPVSAGTIF. A DNA-binding region (homeobox) is located at residues 152-211; that stretch reads VRKPRTIYSSFQLAALQRRFQKTQYLALPERAELAASLGLTQTQVKIWFQNRRSKFKKMW. The residue at position 232 (serine 232) is a Phosphoserine. Residues 250–264 are compositionally biased toward gly residues; the sequence is AGGGGPGSGGSGAGS.

Belongs to the distal-less homeobox family. Interacts (via homeobox DNA-binding domain) with POU4F2; this interaction enhances retinal ganglion cell (RGC) differentiation.

It is found in the nucleus. Acts as a transcriptional activator. Activates transcription of CGA/alpha-GSU, via binding to the downstream activin regulatory element (DARE) in the gene promoter. Plays a role in terminal differentiation of interneurons, such as amacrine and bipolar cells in the developing retina. Likely to play a regulatory role in the development of the ventral forebrain. May play a role in craniofacial patterning and morphogenesis. The chain is Homeobox protein DLX-2 (DLX2) from Homo sapiens (Human).